Consider the following 388-residue polypeptide: Succinate--CoA ligase [ADP-forming] subunit beta (388 aa).

The region spanning 9–244 (KSLFAEYGLP…PSQDDAREAH (236 aa)) is the ATP-grasp domain. Residues K46, 53-55 (GRG), E99, T102, and E107 contribute to the ATP site. The Mg(2+) site is built by N199 and D213. Substrate-binding positions include N264 and 321-323 (GIV).

Belongs to the succinate/malate CoA ligase beta subunit family. In terms of assembly, heterotetramer of two alpha and two beta subunits. It depends on Mg(2+) as a cofactor.

The enzyme catalyses succinate + ATP + CoA = succinyl-CoA + ADP + phosphate. It carries out the reaction GTP + succinate + CoA = succinyl-CoA + GDP + phosphate. It functions in the pathway carbohydrate metabolism; tricarboxylic acid cycle; succinate from succinyl-CoA (ligase route): step 1/1. In terms of biological role, succinyl-CoA synthetase functions in the citric acid cycle (TCA), coupling the hydrolysis of succinyl-CoA to the synthesis of either ATP or GTP and thus represents the only step of substrate-level phosphorylation in the TCA. The beta subunit provides nucleotide specificity of the enzyme and binds the substrate succinate, while the binding sites for coenzyme A and phosphate are found in the alpha subunit. The polypeptide is Succinate--CoA ligase [ADP-forming] subunit beta (Shewanella frigidimarina (strain NCIMB 400)).